A 200-amino-acid polypeptide reads, in one-letter code: 3-isopropylmalate dehydratase small subunit (200 aa).

The protein belongs to the LeuD family. LeuD type 1 subfamily. In terms of assembly, heterodimer of LeuC and LeuD.

It carries out the reaction (2R,3S)-3-isopropylmalate = (2S)-2-isopropylmalate. Its pathway is amino-acid biosynthesis; L-leucine biosynthesis; L-leucine from 3-methyl-2-oxobutanoate: step 2/4. Its function is as follows. Catalyzes the isomerization between 2-isopropylmalate and 3-isopropylmalate, via the formation of 2-isopropylmaleate. The protein is 3-isopropylmalate dehydratase small subunit of Arthrobacter sp. (strain FB24).